Reading from the N-terminus, the 492-residue chain is Chitooligosaccharide oxidase (492 aa).

Residues 1-19 (MHFNTLTCVLVGLVAHTSA) form the signal peptide. The FAD-binding PCMH-type domain maps to 57–229 (LPFEPAAIAV…VELEFQTFAA (173 aa)). Residues 94–154 (HSYTSLGFGG…GKRALAHGTC (61 aa)) constitute a cross-link (6-(S-cysteinyl)-8alpha-(pros-histidyl)-FAD (His-Cys)).

It belongs to the oxygen-dependent FAD-linked oxidoreductase family. Requires FAD as cofactor. Post-translationally, the FAD cofactor is bound via a bicovalent 6-S-cysteinyl, 8alpha-N1-histidyl FAD linkage.

Its subcellular location is the secreted. The enzyme catalyses N,N'-diacetylchitobiose + O2 = N,N'-diacetylchitobiono-1,5-lactone + H2O2. It catalyses the reaction N,N',N''-triacetylchitotriose + O2 = N,N',N''-triacetylchitotriono-1,5-lactone + H2O2. It carries out the reaction N,N',N'',N'''-tetraacetylchitotetraose + O2 = N,N',N'',N'''-tetraacetylchitotetraono-1,5-lactone + H2O2. Functionally, catalyzes the selective oxidation of C1 hydroxyl moieties on chitooligosaccharides with concomitant reduction of molecular oxygen to hydrogen peroxide. This results in the formation of the corresponding lactones, which typically undergo spontaneous hydrolysis. Chitooligosaccharides are homo- or heterooligomers of N-acetylglucosamine (GlcNAc) and D-glucosamine which are linked through beta-1,4-glycosidic bonds. For optimal substrate binding at least 2 GlcNAc units are needed, and chitooligosaccharide oxidase is most efficient on chitobiose, chitotriose and chitotetraose. In Gibberella zeae (strain ATCC MYA-4620 / CBS 123657 / FGSC 9075 / NRRL 31084 / PH-1) (Wheat head blight fungus), this protein is Chitooligosaccharide oxidase.